Here is a 383-residue protein sequence, read N- to C-terminus: Protein salvador homolog 1 (383 aa).

Residues Ser94 and Ser136 each carry the phosphoserine modification. WW domains follow at residues Leu199–Glu232 and Glu234–Ala267. At Thr210 the chain carries Phosphothreonine. An SARAH domain is found at Ile321 to Arg368. A coiled-coil region spans residues Met344–Gln373.

As to quaternary structure, homodimer. Stabilized through interaction with STK3/MST2 or STK4/MST1. Interacts (via SARAH domain) with isoform 1 of NEK2. Interacts with ESR1 only in the presence of STK3/MST2. Interacts with WTIP and AJUBA. In terms of processing, phosphorylated by STK3/MST2 and STK4/MST1. Phosphorylation is not required for SAV1 stability and may increase the number of protein binding sites on the scaffold molecule. Ubiquitously expressed in adult tissues with highest expression in the pancreas, aorta and interventricular septum and lowest expression in skeletal muscle. Expression was higher in fetal than in the adult heart. Expressed in various cell lines.

It localises to the nucleus. The protein localises to the cytoplasm. Regulator of STK3/MST2 and STK4/MST1 in the Hippo signaling pathway which plays a pivotal role in organ size control and tumor suppression by restricting proliferation and promoting apoptosis. The core of this pathway is composed of a kinase cascade wherein STK3/MST2 and STK4/MST1, in complex with its regulatory protein SAV1, phosphorylates and activates LATS1/2 in complex with its regulatory protein MOB1, which in turn phosphorylates and inactivates YAP1 oncoprotein and WWTR1/TAZ. Phosphorylation of YAP1 by LATS1/2 inhibits its translocation into the nucleus to regulate cellular genes important for cell proliferation, cell death, and cell migration. SAV1 is required for STK3/MST2 and STK4/MST1 activation and promotes cell-cycle exit and terminal differentiation in developing epithelial tissues. Plays a role in centrosome disjunction by regulating the localization of NEK2 to centrosomes, and its ability to phosphorylate CROCC and CEP250. In conjunction with STK3/MST2, activates the transcriptional activity of ESR1 through the modulation of its phosphorylation. This chain is Protein salvador homolog 1, found in Homo sapiens (Human).